Here is a 115-residue protein sequence, read N- to C-terminus: Large ribosomal subunit protein bL21 (115 aa).

Belongs to the bacterial ribosomal protein bL21 family. In terms of assembly, part of the 50S ribosomal subunit. Contacts protein L20.

In terms of biological role, this protein binds to 23S rRNA in the presence of protein L20. This Coxiella burnetii (strain Dugway 5J108-111) protein is Large ribosomal subunit protein bL21.